The following is a 694-amino-acid chain: MSSPEADPIGPEVLQQWRKLTEEVREHQFRYYVRDAPIISDAEFDALLDRLTVLEEQHPELCTPDSPTQLVGGAGFMTDFVATEHLERMFSLDNAFSGDELNAWVTRIRAEIGNDAHYLCELKIDGVALSLVYRDGRLTRATTRGDGRTGEDVTLNARTIEDVPERLTVSDIYPLPEVLEVRGEVFFRVVDFQALNTSLVEEGKNPFANPRNSAAGSLRQKDPAVTAHRKLRMICHGLGHIEGFRPATQHQAYLALRDWGLPVSEHTTLVNDIAGVQGCIAYWAEHRHEVDHEIDGIVVKIDEVTLQRRLGSTSRAPRWAIAYKYLPEEAQTKLLDIRVNVGRTGRVTPFAFMTPVKVAGSTVGQATLHNPSEVKRKGVLIGDTVVIRKAGDVIPEVLGPVVDLRDGSEREFVMPTTCPECGTTLAPEKEGDADIRCPNARSCPGQLRERVFHVASRSALDIQGLGYEAGVALLAAQVITSEGDLFTLTEKALLRTELFRNKAGELSANGKRLLVNVDKAKTAPLWRVLVALSIRHVGPTAARALATEFGSVDAILAASPEQLAAVEGVGTTIAAAVTEWFTVDWHRVIVNKWRAAGVRMVDERDTSVLPTCEGLTIVVTGSLAGFSRDDAKEAIVARGGKVAGSVSKKIAYVVVGDLPGYKYDKAVELGVPILNEDGFRLLLEQGPPVQQVVD.

Residues 41–45 (DAEFD), 91–92 (SL), and E121 contribute to the NAD(+) site. Catalysis depends on K123, which acts as the N6-AMP-lysine intermediate. The NAD(+) site is built by R144, E184, K300, and K324. Residues C418, C421, C437, and C443 each contribute to the Zn(2+) site. Residues 607–694 (SVLPTCEGLT…QGPPVQQVVD (88 aa)) enclose the BRCT domain.

The protein belongs to the NAD-dependent DNA ligase family. LigA subfamily. The cofactor is Mg(2+). Mn(2+) serves as cofactor.

It carries out the reaction NAD(+) + (deoxyribonucleotide)n-3'-hydroxyl + 5'-phospho-(deoxyribonucleotide)m = (deoxyribonucleotide)n+m + AMP + beta-nicotinamide D-nucleotide.. Its function is as follows. DNA ligase that catalyzes the formation of phosphodiester linkages between 5'-phosphoryl and 3'-hydroxyl groups in double-stranded DNA using NAD as a coenzyme and as the energy source for the reaction. It is essential for DNA replication and repair of damaged DNA. The sequence is that of DNA ligase from Mycobacterium leprae (strain TN).